A 170-amino-acid polypeptide reads, in one-letter code: Protein Rex (170 aa).

Over residues 1-16 (MPKTRRQRTRRARRNR) the composition is skewed to basic residues. 2 disordered regions span residues 1-27 (MPKT…SQDL) and 69-170 (VQST…GEKP). The Nuclear localization signal, and RNA-binding (RxRE) motif lies at 2–19 (PKTRRQRTRRARRNRPPT). The tract at residues 57–71 (PPAYIDMPSWPPVQS) is homomultimerization. The span at 82-95 (ALSALLSNTLSLAS) shows a compositional bias: low complexity. Residues 83-94 (LSALLSNTLSLA) carry the Nuclear export signal motif. The interval 124–132 (PSFNQCEST) is homomultimerization. Residues 143–160 (PSGISSPPSPSPNLASVP) show a composition bias toward low complexity. Ser-151 and Ser-153 each carry phosphoserine; by host. A compositionally biased stretch (polar residues) spans 161–170 (KTSTPPGEKP).

It belongs to the deltaretrovirus Rex protein family. Homomultimer. In terms of processing, phosphorylation is essential for RNA-binding and function.

The protein resides in the host nucleus. The protein localises to the host nucleolus. It localises to the host cytoplasm. Rex escorts unspliced gag-pro-pol and singly spliced env mRNAs out of the nucleus of infected cells. These mRNAs carry a recognition sequence called Rex responsive element (RxRE or XRE) located at the 3' region of the long terminal repeat (LTR). This function is essential since most HTLV proteins are translated from unspliced or partially spliced pre-mRNAs that cannot exit the nucleus by the pathway used by fully processed cellular mRNAs. The polypeptide is Protein Rex (Human T-cell leukemia virus 2 (HTLV-2)).